The chain runs to 258 residues: UPF0246 protein YaaA (258 aa).

The protein belongs to the UPF0246 family.

This Shigella sonnei (strain Ss046) protein is UPF0246 protein YaaA.